The primary structure comprises 115 residues: Large ribosomal subunit protein bL19 (115 aa).

This sequence belongs to the bacterial ribosomal protein bL19 family.

Functionally, this protein is located at the 30S-50S ribosomal subunit interface and may play a role in the structure and function of the aminoacyl-tRNA binding site. This chain is Large ribosomal subunit protein bL19, found in Nitratidesulfovibrio vulgaris (strain DSM 19637 / Miyazaki F) (Desulfovibrio vulgaris).